Here is a 419-residue protein sequence, read N- to C-terminus: Tyrosine--tRNA ligase (419 aa).

Residue Tyr-34 coordinates L-tyrosine. The short motif at 39 to 48 is the 'HIGH' region element; that stretch reads PTADSLHIGH. Tyr-169, Gln-173, and Asp-176 together coordinate L-tyrosine. The 'KMSKS' region signature appears at 230-234; it reads KFGKT. ATP is bound at residue Lys-233. The S4 RNA-binding domain occupies 352 to 419; it reads VPLVELLVSA…KKKYYLIRYA (68 aa).

It belongs to the class-I aminoacyl-tRNA synthetase family. TyrS type 1 subfamily. As to quaternary structure, homodimer.

The protein localises to the cytoplasm. The catalysed reaction is tRNA(Tyr) + L-tyrosine + ATP = L-tyrosyl-tRNA(Tyr) + AMP + diphosphate + H(+). Catalyzes the attachment of tyrosine to tRNA(Tyr) in a two-step reaction: tyrosine is first activated by ATP to form Tyr-AMP and then transferred to the acceptor end of tRNA(Tyr). The sequence is that of Tyrosine--tRNA ligase (tyrS) from Geobacillus stearothermophilus (Bacillus stearothermophilus).